Consider the following 1093-residue polypeptide: MTDLSDVSRTAAAKPPAVPGRGPANKVRFVTAASLFDGHDASINIMRRILQSQGCEVIHLGHNRSVQEVVTAALQEDVQGIAISSYQGGHVEYFKYMIDLLREHGGEHIQVFGGGGGVIVPDEIRELQAYGVARIYSPEDGQRMGLAGMITDMAQRCDIDLTRYAPTTLDTVVAGDRRALAQLITALENGKADPELVSALHAQAKAAAVPVLGITGTGGAGKSSLTDELIRRFRLDQDDALSIAVISIDPSRRKSGGALLGDRIRMNAINHPNIFMRSLATREAGSEISQALPDVIAACKAARFDLVIVETSGIGQGDAAIVPHVDLSLYVMTPEFGAASQLEKIDMLDFADFVAINKFDRKGAQDAWRDVAKQVQRNREQWHSRAEDMPVYGTQASRFNDDGVTMLYQGLVGALGARGMSLKPGTLPNLEGRISTGQNVIVPPARSRYLAELADTVRAYHRRVVAQSKLARERQQLRAAHDMLQGAGHESAALETLASERDVSLGAVERKLLAMWPQMQQAYSGDEYVVKIRDKEIRTGLISTTLSGTKIRKVVLPRFEDEGEILKWLMRENVPGSFPYTAGVFAFKREGEDPTRMFAGEGDAFRTNRRFKLVSEGMEAKRLSTAFDSVTLYGEDPHERPDIYGKVGNSGVSIATLEDMKVLYDGFDLTNPSTSVSMTINGPAPTILAMFMNTAIDQQIDRFRADNGRDPTADEEAKIRAWVLQNVRGTVQADILKEDQGQNTCIFSTEFSLKVMGDIQEYFVHHQVRNFYSVSISGYHIAEAGANPISQLAFTLANGFTYVEAYLARGMHIDDFAPNLSFFFSNGMDPEYSVLGRVARRIWAVTMRDKYGANDRSQKLKYHIQTSGRSLHAQEIDFNDIRTTLQALIAIYDNCNSLHTNAYDEAITTPTAESVRRALAIQLIINREWGVAKCENPNQGSFLIEELTDLVEEAVLQEFERIAERGGVLGAMETGYQRGKIQEESLYYEQLKHDGTLPIIGVNTFRNPNGDPTPQTLELARSSEDEKQSQLHRLTEFHGAHQADAEAMLARLRQAVIDNRNVFAVLMDAVRVCSLGQITHALFEVGGQYRRNM.

Residues 1–20 (MTDLSDVSRTAAAKPPAVPG) form a disordered region. The B12-binding domain occupies 26–156 (KVRFVTAASL…AGMITDMAQR (131 aa)). His39 serves as a coordination point for adenosylcob(III)alamin. The GTPase chaperone MeaI stretch occupies residues 169–417 (LDTVVAGDRR…YQGLVGALGA (249 aa)). 219-224 (GAGKSS) provides a ligand contact to GTP. Residues Ser223, Ile248, Asp249, and Asp262 each contribute to the Mg(2+) site. A GTP-binding site is contributed by Arg265. Residues Glu310 and Thr311 each coordinate Mg(2+). 357-360 (NKFD) provides a ligand contact to GTP. The interval 418–579 (RGMSLKPGTL…MRENVPGSFP (162 aa)) is linker. Substrate is bound by residues Phe587, Arg622, Arg728, Tyr772, Ser821, Arg856, and Lys861. 2 residues coordinate GTP: Glu973 and Asn1092.

This sequence belongs to the IcmF family. Homodimer. Requires adenosylcob(III)alamin as cofactor. Mg(2+) serves as cofactor.

The enzyme catalyses 2-methylpropanoyl-CoA = butanoyl-CoA. It carries out the reaction 3-methylbutanoyl-CoA = 2,2-dimethylpropanoyl-CoA. It catalyses the reaction GTP + H2O = GDP + phosphate + H(+). With respect to regulation, is prone to inactivation during catalytic turnover due to the occasional loss of the 5'-deoxyadenosine moiety and formation of the inactive cob(II)alamin cofactor in its active site. The GTPase activity of IcmF powers the ejection of the inactive cofactor and requires the presence of an acceptor protein, adenosyltransferase (ATR), for receiving it. ATR, in turn, catalyzes an adenosylation reaction converting cob(II)alamin in the presence of ATP and a reductant to the active AdoCbl cofactor. The repaired cofactor is then reloaded onto IcmF in a GTPase-gated step, regenerating active enzyme. The GTPase activity of IcmF is significantly decreased in the presence of excess of AdoCbl or cob(II)alamin and is higher in the apoenzyme state, indicating that the G-domain senses the presence and identity of the cofactor in the mutase active site. In terms of biological role, catalyzes the reversible interconversion of isobutyryl-CoA and n-butyryl-CoA, and to a much lesser extent, of pivalyl-CoA and isovaleryl-CoA, using radical chemistry. Also exhibits GTPase activity, associated with its G-protein domain (MeaI) that functions as a chaperone that assists cofactor delivery and proper holo-enzyme assembly. The G-domain of IcmF also has a role in its cofactor repair. Does not display ATPase activity. The protein is Fused isobutyryl-CoA mutase of Cupriavidus metallidurans (strain ATCC 43123 / DSM 2839 / NBRC 102507 / CH34) (Ralstonia metallidurans).